Consider the following 411-residue polypeptide: Na(+)-translocating NADH-quinone reductase subunit F (411 aa).

Residues 6-26 (AIGGVAMFTLIIMGLVAIILA) form a helical membrane-spanning segment. Residues 35–129 (GDVTIHINDN…DMKIEIDPEF (95 aa)) form the 2Fe-2S ferredoxin-type domain. Cys-72, Cys-78, Cys-81, and Cys-113 together coordinate [2Fe-2S] cluster. The region spanning 132–273 (VQKWECEVIS…SGPYGEFFAK (142 aa)) is the FAD-binding FR-type domain.

This sequence belongs to the NqrF family. In terms of assembly, composed of six subunits; NqrA, NqrB, NqrC, NqrD, NqrE and NqrF. It depends on [2Fe-2S] cluster as a cofactor. FAD serves as cofactor.

Its subcellular location is the cell inner membrane. The enzyme catalyses a ubiquinone + n Na(+)(in) + NADH + H(+) = a ubiquinol + n Na(+)(out) + NAD(+). In terms of biological role, NQR complex catalyzes the reduction of ubiquinone-1 to ubiquinol by two successive reactions, coupled with the transport of Na(+) ions from the cytoplasm to the periplasm. The first step is catalyzed by NqrF, which accepts electrons from NADH and reduces ubiquinone-1 to ubisemiquinone by a one-electron transfer pathway. This is Na(+)-translocating NADH-quinone reductase subunit F from Psychrobacter cryohalolentis (strain ATCC BAA-1226 / DSM 17306 / VKM B-2378 / K5).